A 117-amino-acid polypeptide reads, in one-letter code: Large ribosomal subunit protein uL24 (117 aa).

This sequence belongs to the universal ribosomal protein uL24 family. As to quaternary structure, part of the 50S ribosomal subunit.

One of two assembly initiator proteins, it binds directly to the 5'-end of the 23S rRNA, where it nucleates assembly of the 50S subunit. Functionally, one of the proteins that surrounds the polypeptide exit tunnel on the outside of the subunit. The polypeptide is Large ribosomal subunit protein uL24 (Trichormus variabilis (strain ATCC 29413 / PCC 7937) (Anabaena variabilis)).